We begin with the raw amino-acid sequence, 222 residues long: 7-cyano-7-deazaguanine synthase (222 aa).

Residue 9–19 participates in ATP binding; that stretch reads ISGGMDSALSA. Cysteine 188, cysteine 196, cysteine 199, and cysteine 202 together coordinate Zn(2+).

The protein belongs to the QueC family. The cofactor is Zn(2+).

The catalysed reaction is 7-carboxy-7-deazaguanine + NH4(+) + ATP = 7-cyano-7-deazaguanine + ADP + phosphate + H2O + H(+). The protein operates within purine metabolism; 7-cyano-7-deazaguanine biosynthesis. In terms of biological role, catalyzes the ATP-dependent conversion of 7-carboxy-7-deazaguanine (CDG) to 7-cyano-7-deazaguanine (preQ(0)). The protein is 7-cyano-7-deazaguanine synthase of Sulfurovum sp. (strain NBC37-1).